An 89-amino-acid polypeptide reads, in one-letter code: uncharacterized protein (89 aa).

Helical transmembrane passes span 5 to 27 (TLTEYCLLIFFTGFYLAVTGFTA), 32 to 51 (LYIGIALIYIFSHIFSKRLL), and 63 to 85 (LFFSVLAIIGSVFITVLCIALVA).

The protein localises to the cell membrane. This is an uncharacterized protein from Bacillus subtilis (strain 168).